The following is a 279-amino-acid chain: Calcium-binding protein 4 (279 aa).

Positions 1-12 are enriched in basic and acidic residues; the sequence is MAEEQGRGRHGP. A disordered region spans residues 1–114; it reads MAEEQGRGRH…PGPQHDAAQR (114 aa). S42 bears the Phosphoserine mark. Over residues 55 to 65 the composition is skewed to polar residues; sequence GPSSSGEQTPM. EF-hand domains lie at 133–168, 187–204, 210–245, and 247–279; these read EELDELQAAFEEFDTDHDGYIGYRDLGECMRTLGYM, GRVDFEEFVEMMGPKLRE, LGLRELRIAFREFDRDRDGRITVAELREAAPALLGE, and LVGPELEEMLQEVDLNGDGTVDFNEFVMMLSRH. Ca(2+) contacts are provided by D146, D148, D150, Y152, and D157. Ca(2+) is bound by residues D223, D225, D227, R229, E234, D260, N262, D264, T266, and E271.

In terms of assembly, interacts with CACNA1F and CACNA1D (via IQ domain) in a calcium independent manner. Interacts (via N-terminus) with UNC119. In terms of processing, phosphorylated. Phosphorylation levels change with the light conditions and regulate the activity. As to expression, expressed in the retina.

It is found in the cytoplasm. It localises to the presynapse. Functionally, may play a role in normal synaptic function, probably through regulation of Ca(2+) influx and neurotransmitter release in photoreceptor synaptic terminals and in auditory transmission. Modulator of CACNA1F, shifting the activation range to more hyperpolarized voltages. This Bos taurus (Bovine) protein is Calcium-binding protein 4 (CABP4).